A 437-amino-acid polypeptide reads, in one-letter code: tRNA-2-methylthio-N(6)-dimethylallyladenosine synthase (437 aa).

An MTTase N-terminal domain is found at 1 to 115; sequence MKVYIETMGC…ISQVIHKEKA (115 aa). [4Fe-4S] cluster-binding residues include Cys10, Cys46, Cys78, Cys148, Cys152, and Cys155. Residues 134–367 enclose the Radical SAM core domain; sequence KKAQIRSLLN…QNRHKEILEE (234 aa). In terms of domain architecture, TRAM spans 370-436; sequence KLEVGKTHVV…KGRLMATTKG (67 aa).

The protein belongs to the methylthiotransferase family. MiaB subfamily. As to quaternary structure, monomer. The cofactor is [4Fe-4S] cluster.

It localises to the cytoplasm. It catalyses the reaction N(6)-dimethylallyladenosine(37) in tRNA + (sulfur carrier)-SH + AH2 + 2 S-adenosyl-L-methionine = 2-methylsulfanyl-N(6)-dimethylallyladenosine(37) in tRNA + (sulfur carrier)-H + 5'-deoxyadenosine + L-methionine + A + S-adenosyl-L-homocysteine + 2 H(+). Catalyzes the methylthiolation of N6-(dimethylallyl)adenosine (i(6)A), leading to the formation of 2-methylthio-N6-(dimethylallyl)adenosine (ms(2)i(6)A) at position 37 in tRNAs that read codons beginning with uridine. This is tRNA-2-methylthio-N(6)-dimethylallyladenosine synthase from Helicobacter pylori (strain J99 / ATCC 700824) (Campylobacter pylori J99).